Reading from the N-terminus, the 306-residue chain is Follistatin-related protein 1 (306 aa).

The signal sequence occupies residues 1-18 (MWKRWLALALVTIALVHG). One can recognise a Follistatin-like domain in the interval 28–51 (ICANVFCGAGRECAVTEKGEPTCL). Disulfide bonds link cysteine 29–cysteine 40, cysteine 34–cysteine 50, cysteine 52–cysteine 82, cysteine 56–cysteine 75, and cysteine 64–cysteine 96. Residues 46–98 (GEPTCLCIEQCKPHKRPVCGSNGKTYLNHCELHRDACLTGSKIQVDYDGHCKE) form the Kazal-like domain. Asparagine 142 carries an N-linked (GlcNAc...) asparagine glycan. The region spanning 142 to 176 (NYSEILDKYFKSFDNGDSHLDSSEFLKFVEQNETA) is the EF-hand 1 domain. Serine 163 carries the post-translational modification Phosphoserine. N-linked (GlcNAc...) asparagine glycans are attached at residues asparagine 173 and asparagine 178. The EF-hand 2 domain maps to 191–226 (LRGLCVDALIELSDENADWKLSFQEFLKCLNPSFNP). The VWFC domain occupies 231-285 (CALEDETYADGAETEVDCNRCVCSCGHWVCTAMTCDGKNQKGVQTHTEEEMTRYA).

In terms of assembly, homodimer. Interacts with SCN10A. Interacts with DIP2A; DIP2A may act as a cell surface receptor for FSTL1. Interacts with BMP4. Interacts with CD14; this interaction promotes TL4-mediated signaling cascade.

It is found in the secreted. Secreted glycoprotein that is involved in various physiological processes, such as angiogenesis, regulation of the immune response, cell proliferation and differentiation. Plays a role in the development of the central nervous system, skeletal system, lungs, and ureter. Promotes endothelial cell survival, migration and differentiation into network structures in an AKT-dependent manner. Also promotes survival of cardiac myocytes. Initiates various signaling cascades by activating different receptors on the cell surface such as DIP2A, TLR4 or BMP receptors. The chain is Follistatin-related protein 1 (Fstl1) from Rattus norvegicus (Rat).